A 440-amino-acid chain; its full sequence is L-seryl-tRNA(Sec) selenium transferase (440 aa).

Lys-282 carries the post-translational modification N6-(pyridoxal phosphate)lysine.

Belongs to the SelA family. Pyridoxal 5'-phosphate serves as cofactor.

The protein resides in the cytoplasm. It catalyses the reaction L-seryl-tRNA(Sec) + selenophosphate + H(+) = L-selenocysteinyl-tRNA(Sec) + phosphate. It functions in the pathway aminoacyl-tRNA biosynthesis; selenocysteinyl-tRNA(Sec) biosynthesis; selenocysteinyl-tRNA(Sec) from L-seryl-tRNA(Sec) (bacterial route): step 1/1. Functionally, converts seryl-tRNA(Sec) to selenocysteinyl-tRNA(Sec) required for selenoprotein biosynthesis. This Campylobacter jejuni (strain RM1221) protein is L-seryl-tRNA(Sec) selenium transferase.